The chain runs to 418 residues: CinA-like protein (418 aa).

This sequence belongs to the CinA family.

This Cyanothece sp. (strain PCC 7425 / ATCC 29141) protein is CinA-like protein.